Here is a 558-residue protein sequence, read N- to C-terminus: Zeta-carotene desaturase, chloroplastic/chromoplastic (558 aa).

The transit peptide at 1 to 27 (MASSVVFAATGSLSVPPLKSRRFYVNS) directs the protein to the chloroplast and chromoplast.

The protein belongs to the zeta carotene desaturase family. Decylplastoquinone is required as a cofactor. Requires 6-decylubiquinone as cofactor. As to expression, highly expressed in leaves. Expressed at low levels in flowers and siliques.

It localises to the plastid. Its subcellular location is the chloroplast. The protein localises to the chromoplast. It catalyses the reaction 9,9'-di-cis-zeta-carotene + 2 a quinone = 7,7',9,9'-tetra-cis-lycopene + 2 a quinol. It participates in carotenoid biosynthesis; lycopene biosynthesis. In terms of biological role, plays a crucial role in plant growth and development. Is essential for the biosynthesis of carotenoids. Carotenoids are involved in different physiological processes, including coloration, photoprotection, biosynthesis of abscisic acid (ABA) and chloroplast biogenesis. Catalyzes the conversion of zeta-carotene to lycopene via the intermediary of neurosporene. It carries out two consecutive desaturations (introduction of double bonds) at positions C-7 and C-7'. Shows stereoselectivity toward trans C15-C15'zeta-carotene double bond. The zeta-carotene produced by the phytoene desaturase PDS has a C15-C15' double bond in the cis configuration and it requires isomerization before being recognized as substrate by ZDS. The main product is 7,9,7',9'-tetra-cis-lycopene (pro-lycopene). The polypeptide is Zeta-carotene desaturase, chloroplastic/chromoplastic (Arabidopsis thaliana (Mouse-ear cress)).